Consider the following 405-residue polypeptide: Serine/threonine transporter SstT (405 aa).

The next 9 membrane-spanning stretches (helical) occupy residues 13-33 (GNLVLQILAGILLGAAMATFS), 43-63 (IGNLFVGALKAVAPVLVFILV), 81-101 (IVVLYLFGTFSAALTAVILSF), 140-160 (ALMNANYIGILAWGVGLGLAL), 191-211 (FGIFGLVASTFATTGFDALAG), 215-235 (LLAVLLGAMAFIALVVNPMIV), 297-317 (MAGAAITITVLTLAAVHTMGI), 338-358 (ASGVAGGSLLLIPLACGLFGI), and 362-382 (IAMQVVAVGFIIGVIQDSAET).

The protein belongs to the dicarboxylate/amino acid:cation symporter (DAACS) (TC 2.A.23) family.

Its subcellular location is the cell inner membrane. The enzyme catalyses L-serine(in) + Na(+)(in) = L-serine(out) + Na(+)(out). It carries out the reaction L-threonine(in) + Na(+)(in) = L-threonine(out) + Na(+)(out). Involved in the import of serine and threonine into the cell, with the concomitant import of sodium (symport system). The sequence is that of Serine/threonine transporter SstT from Vibrio cholerae serotype O1 (strain ATCC 39315 / El Tor Inaba N16961).